The following is a 365-amino-acid chain: tRNA N6-adenosine threonylcarbamoyltransferase (365 aa).

His-111 and His-115 together coordinate Fe cation. Residues 140–144, Asp-173, Gly-186, and Asn-298 each bind substrate; that span reads IVSGG. Asp-323 lines the Fe cation pocket.

The protein belongs to the KAE1 / TsaD family. It depends on Fe(2+) as a cofactor.

It is found in the cytoplasm. The enzyme catalyses L-threonylcarbamoyladenylate + adenosine(37) in tRNA = N(6)-L-threonylcarbamoyladenosine(37) in tRNA + AMP + H(+). Functionally, required for the formation of a threonylcarbamoyl group on adenosine at position 37 (t(6)A37) in tRNAs that read codons beginning with adenine. Is involved in the transfer of the threonylcarbamoyl moiety of threonylcarbamoyl-AMP (TC-AMP) to the N6 group of A37, together with TsaE and TsaB. TsaD likely plays a direct catalytic role in this reaction. In Thermomicrobium roseum (strain ATCC 27502 / DSM 5159 / P-2), this protein is tRNA N6-adenosine threonylcarbamoyltransferase.